The following is a 103-amino-acid chain: Flagellar hook-basal body complex protein FliE (103 aa).

Belongs to the FliE family.

Its subcellular location is the bacterial flagellum basal body. The protein is Flagellar hook-basal body complex protein FliE of Erwinia tasmaniensis (strain DSM 17950 / CFBP 7177 / CIP 109463 / NCPPB 4357 / Et1/99).